Consider the following 465-residue polypeptide: Kynureninase (465 aa).

Pyridoxal 5'-phosphate contacts are provided by residues Leu-133, Thr-134, 161-164, Ser-217, Asp-246, His-249, and Tyr-271; that span reads FPSD. Lys-272 is modified (N6-(pyridoxal phosphate)lysine). Positions 302 and 330 each coordinate pyridoxal 5'-phosphate.

This sequence belongs to the kynureninase family. As to quaternary structure, homodimer. Pyridoxal 5'-phosphate serves as cofactor.

Its subcellular location is the cytoplasm. It catalyses the reaction L-kynurenine + H2O = anthranilate + L-alanine + H(+). The catalysed reaction is 3-hydroxy-L-kynurenine + H2O = 3-hydroxyanthranilate + L-alanine + H(+). Its pathway is amino-acid degradation; L-kynurenine degradation; L-alanine and anthranilate from L-kynurenine: step 1/1. It participates in cofactor biosynthesis; NAD(+) biosynthesis; quinolinate from L-kynurenine: step 2/3. In terms of biological role, catalyzes the cleavage of L-kynurenine (L-Kyn) and L-3-hydroxykynurenine (L-3OHKyn) into anthranilic acid (AA) and 3-hydroxyanthranilic acid (3-OHAA), respectively. The polypeptide is Kynureninase (Nematostella vectensis (Starlet sea anemone)).